A 236-amino-acid polypeptide reads, in one-letter code: Sugar fermentation stimulation protein homolog (236 aa).

It belongs to the SfsA family.

The protein is Sugar fermentation stimulation protein homolog of Desulfotalea psychrophila (strain LSv54 / DSM 12343).